The sequence spans 392 residues: Tropomodulin (392 aa).

3 disordered regions span residues 1–30 (MSQAKTDYYSEEKTFSAPSANSQQGTQLPS), 59–90 (DLNNDFDPDNSMLPPSQRCRDQTDKEPTGPYK), and 118–138 (QKRGKVYDSDSGRNSEEPENG). The segment covering 16–29 (SAPSANSQQGTQLP) has biased composition (polar residues). Composition is skewed to basic and acidic residues over residues 76–90 (RCRDQTDKEPTGPYK) and 122–138 (KVYDSDSGRNSEEPENG).

Belongs to the tropomodulin family. In terms of assembly, binds to the N-terminus of actin.

It localises to the cytoplasm. The protein localises to the cytoskeleton. Functionally, acts as the pointed end capping protein which maintains the length and dynamics of the actin filament. Blocks the elongation and depolymerization of the actin filaments at the pointed end. This Caenorhabditis elegans protein is Tropomodulin (unc-94).